Reading from the N-terminus, the 200-residue chain is MVATCLQVVGFVTSFVGWIGVIVTTSTNDWVVTCGYTIPTCRKLDELGSKGLWADCVMATGLYHCKPLVDILPCRALMIAASVLGLPAILLLLTVLPCIRMGQEPGVAKYRRAQLAGVLLILLALCAIVATIWFPVCAHRETTIVSFGYSLYAGWIGAVLCLVGGCVILCCAGDAQAFGENRFYYTAGSSSPTHAKSAHV.

Position 1 (methionine 1) is a topological domain, cytoplasmic. A helical transmembrane segment spans residues valine 2 to isoleucine 22. At valine 23 to arginine 75 the chain is on the extracellular side. A helical membrane pass occupies residues alanine 76–leucine 96. Over proline 97–leucine 115 the chain is Cytoplasmic. The chain crosses the membrane as a helical span at residues alanine 116 to valine 136. The Extracellular portion of the chain corresponds to cysteine 137 to serine 150. Residues leucine 151–cysteine 171 form a helical membrane-spanning segment. The Cytoplasmic segment spans residues alanine 172 to valine 200. Phosphoserine is present on residues serine 190 and serine 191.

It belongs to the claudin family. As to quaternary structure, interacts with tetraspanin-3/TSPAN3. Interacts with OCLN.

Its subcellular location is the cell junction. It localises to the tight junction. The protein resides in the cell membrane. In terms of biological role, plays a major role in tight junction-specific obliteration of the intercellular space, through calcium-independent cell-adhesion activity. The protein is Claudin-11 (CLDN11) of Pongo abelii (Sumatran orangutan).